The sequence spans 489 residues: NADH-quinone oxidoreductase subunit N (489 aa).

14 helical membrane passes run V6 to L26, V37 to S57, L66 to A86, F105 to L125, A127 to F147, Y159 to A179, I204 to L224, P239 to L259, F271 to A291, R299 to C319, V329 to L349, S377 to G397, F408 to R430, and A452 to I472.

This sequence belongs to the complex I subunit 2 family. In terms of assembly, NDH-1 is composed of 14 different subunits. Subunits NuoA, H, J, K, L, M, N constitute the membrane sector of the complex.

The protein localises to the cell inner membrane. It catalyses the reaction a quinone + NADH + 5 H(+)(in) = a quinol + NAD(+) + 4 H(+)(out). Functionally, NDH-1 shuttles electrons from NADH, via FMN and iron-sulfur (Fe-S) centers, to quinones in the respiratory chain. The immediate electron acceptor for the enzyme in this species is believed to be ubiquinone. Couples the redox reaction to proton translocation (for every two electrons transferred, four hydrogen ions are translocated across the cytoplasmic membrane), and thus conserves the redox energy in a proton gradient. The protein is NADH-quinone oxidoreductase subunit N of Tolumonas auensis (strain DSM 9187 / NBRC 110442 / TA 4).